Reading from the N-terminus, the 283-residue chain is Cilia- and flagella-associated protein 77 (283 aa).

Residues aspartate 151–glycine 170 are disordered.

The protein belongs to the CFAP77 family. Microtubule inner protein component of sperm flagellar doublet microtubules.

It is found in the cytoplasm. It localises to the cytoskeleton. The protein resides in the cilium axoneme. The protein localises to the flagellum axoneme. Microtubule inner protein (MIP) part of the dynein-decorated doublet microtubules (DMTs) in cilia axoneme, which is required for motile cilia beating. The chain is Cilia- and flagella-associated protein 77 from Mus musculus (Mouse).